Reading from the N-terminus, the 297-residue chain is Ribosomal RNA small subunit methyltransferase H (297 aa).

Residues glycine 37–histidine 39, aspartate 56, phenylalanine 87, aspartate 102, and histidine 109 contribute to the S-adenosyl-L-methionine site.

It belongs to the methyltransferase superfamily. RsmH family.

It is found in the cytoplasm. It catalyses the reaction cytidine(1402) in 16S rRNA + S-adenosyl-L-methionine = N(4)-methylcytidine(1402) in 16S rRNA + S-adenosyl-L-homocysteine + H(+). Functionally, specifically methylates the N4 position of cytidine in position 1402 (C1402) of 16S rRNA. This is Ribosomal RNA small subunit methyltransferase H from Borrelia turicatae (strain 91E135).